A 747-amino-acid polypeptide reads, in one-letter code: DNA-directed RNA polymerase subunit beta' (747 aa).

Zn(2+) is bound by residues C70, C72, C97, and C100. Positions 502, 504, and 506 each coordinate Mg(2+).

The protein belongs to the RNA polymerase beta' chain family. RpoC1 subfamily. As to quaternary structure, in plastids the minimal PEP RNA polymerase catalytic core is composed of four subunits: alpha, beta, beta', and beta''. When a (nuclear-encoded) sigma factor is associated with the core the holoenzyme is formed, which can initiate transcription. It depends on Mg(2+) as a cofactor. Zn(2+) serves as cofactor.

Its subcellular location is the plastid. The protein localises to the chloroplast. It catalyses the reaction RNA(n) + a ribonucleoside 5'-triphosphate = RNA(n+1) + diphosphate. In terms of biological role, DNA-dependent RNA polymerase catalyzes the transcription of DNA into RNA using the four ribonucleoside triphosphates as substrates. The protein is DNA-directed RNA polymerase subunit beta' of Gnetum parvifolium (Small-leaved jointfir).